The chain runs to 59 residues: Alpha-like toxin CsEv5 (59 aa).

The 59-residue stretch at 1 to 59 (KDGYPVDSKGCKLSCVANNYCDNQCKMKKASGGHCYAMSCYCEGLPENAKVSDSATNIC) folds into the LCN-type CS-alpha/beta domain. 4 disulfide bridges follow: C11/C59, C15/C35, C21/C40, and C25/C42.

The protein belongs to the long (4 C-C) scorpion toxin superfamily. Sodium channel inhibitor family. As to expression, expressed by the venom gland.

The protein resides in the secreted. In terms of biological role, binds voltage-independently sodium channels (Nav) and inhibits the inactivation of the activated channels, thereby blocking neuronal transmission. Is highly toxic to insects and barely toxic to mammals. As it does not compete with the classical alpha-toxin AaH2, this toxin is considered as an alpha-like toxin. The polypeptide is Alpha-like toxin CsEv5 (Centruroides sculpturatus (Arizona bark scorpion)).